We begin with the raw amino-acid sequence, 121 residues long: Cytochrome c2 iso-2 (121 aa).

4 residues coordinate heme c: cysteine 15, cysteine 18, histidine 19, and methionine 98.

This sequence belongs to the cytochrome c family. Post-translationally, binds 1 heme c group covalently per subunit.

Cytochrome c2 is found mainly in purple, non-sulfur, photosynthetic bacteria where it functions as the electron donor to the oxidized bacteriochlorophyll in the photophosphorylation pathway. However, it may also have a role in the respiratory chain and is found in some non-photosynthetic bacteria. This is Cytochrome c2 iso-2 from Rhodospirillum centenum (Rhodocista centenaria).